The following is a 1388-amino-acid chain: ABC transporter G family member 52 (1388 aa).

The disordered stretch occupies residues Met-1 to Asp-24. The region spanning Thr-135–Glu-406 is the ABC transporter 1 domain. Gly-168–Thr-175 lines the ATP pocket. The ABC transmembrane type-2 1 domain occupies Glu-484–Phe-697. Transmembrane regions (helical) follow at residues Leu-503–Ile-523, Ala-541–Ile-561, Ile-590–Phe-610, Phe-621–Leu-641, Val-646–Ile-666, Trp-675–Asn-695, and Ile-732–Leu-752. The 253-residue stretch at Ile-791–Gln-1043 folds into the ABC transporter 2 domain. Gly-836 to Thr-843 contacts ATP. The region spanning Thr-1116–Phe-1330 is the ABC transmembrane type-2 2 domain. A run of 7 helical transmembrane segments spans residues Ile-1136–Gly-1156, Leu-1167–Val-1183, Phe-1223–Tyr-1243, Phe-1250–Met-1270, Met-1280–Ile-1300, Ile-1305–Leu-1325, and Leu-1357–Gly-1377.

The protein belongs to the ABC transporter superfamily. ABCG family. PDR (TC 3.A.1.205) subfamily.

The protein resides in the membrane. May be a general defense protein. This is ABC transporter G family member 52 from Oryza sativa subsp. japonica (Rice).